A 1457-amino-acid polypeptide reads, in one-letter code: ABC transporter G family member 36 (1457 aa).

The interval 14–43 (RLGGSMRGDSGSMWRRGDDVFSRSSREEDD) is disordered. The span at 28-39 (RRGDDVFSRSSR) shows a compositional bias: basic and acidic residues. Residues 164–437 (GNALGILPNR…FESTGFKCPD (274 aa)) form the ABC transporter 1 domain. ATP is bound at residue 197 to 204 (GPPGSGKT). Residues 515 to 728 (ELLKANIDRE…AQNAISVNEL (214 aa)) enclose the ABC transmembrane type-2 1 domain. Transmembrane regions (helical) follow at residues 533–553 (FVYM…MTLF), 565–585 (SGGI…FNGF), 621–641 (IPIT…VIGF), 653–673 (LLML…GGAA), 677–697 (IVAN…GGFI), 706–726 (WWIW…ISVN), and 765–785 (IGFG…TLAL). Residues 821 to 841 (SSGSTRRPMGNGTENDSTIVD) are disordered. An ABC transporter 2 domain is found at 860–1112 (LSFDNVRYSV…ELIKYFESIP (253 aa)). An ATP-binding site is contributed by 905 to 912 (GVSGAGKT). Residues 1185–1399 (TQCMACLWKQ…TLYGLVVSQF (215 aa)) enclose the ABC transmembrane type-2 2 domain. The next 7 helical transmembrane spans lie at 1209–1229 (FFFT…LGGK), 1244–1264 (YAAV…VVAV), 1292–1312 (IPYT…MIGF), 1319–1339 (FFWY…YGMM), 1349–1369 (IASI…GFVI), 1380–1400 (WYCW…SQFG), and 1429–1449 (WVAT…GFAI).

Belongs to the ABC transporter superfamily. ABCG family. PDR (TC 3.A.1.205) subfamily.

The protein resides in the membrane. May be a general defense protein. The sequence is that of ABC transporter G family member 36 from Oryza sativa subsp. indica (Rice).